Here is a 274-residue protein sequence, read N- to C-terminus: MAHYFVGDVQGCFAELQRLLAKVDFNPSRDELWAVGDLVARGPDSLATLRFFQSLGDAGKIVLGNHDLHLLALHGKLKRDKPSDNLTPLLNAPDISSLIDWLRQQPLMRELPEHKVIMTHAGVPPQWSLEVLRQESLLVSQALKQNDYLDALISQMYTDTAERWDPSAIGINRLRFCINALTRMRYLYVDGHLDFDCKQPPEDCSNPQLRPWFEFTSTLRNSHILVFGHWAALMGKVDAPNLKALDTGCCWGEHLTLWHLEKDQKITQKKLKKS.

The protein belongs to the Ap4A hydrolase family.

The catalysed reaction is P(1),P(4)-bis(5'-adenosyl) tetraphosphate + H2O = 2 ADP + 2 H(+). In terms of biological role, hydrolyzes diadenosine 5',5'''-P1,P4-tetraphosphate to yield ADP. The protein is Bis(5'-nucleosyl)-tetraphosphatase, symmetrical of Shewanella oneidensis (strain ATCC 700550 / JCM 31522 / CIP 106686 / LMG 19005 / NCIMB 14063 / MR-1).